A 353-amino-acid chain; its full sequence is uncharacterized protein (353 aa).

A signal peptide spans 1–24; sequence MRVVERAVIACYLGITIFSGIAFG.

This sequence belongs to the chlamydial CPn_1058/CT_355/TC_0634 family.

This is an uncharacterized protein from Chlamydia trachomatis serovar D (strain ATCC VR-885 / DSM 19411 / UW-3/Cx).